The chain runs to 295 residues: Pyridoxal 5'-phosphate synthase subunit PdxS (295 aa).

Asp25 contributes to the D-ribose 5-phosphate binding site. Catalysis depends on Lys82, which acts as the Schiff-base intermediate with D-ribose 5-phosphate. Gly154 serves as a coordination point for D-ribose 5-phosphate. Position 166 (Arg166) interacts with D-glyceraldehyde 3-phosphate. Residues Gly215 and Gly236–Ser237 each bind D-ribose 5-phosphate.

It belongs to the PdxS/SNZ family. In terms of assembly, in the presence of PdxT, forms a dodecamer of heterodimers.

It carries out the reaction aldehydo-D-ribose 5-phosphate + D-glyceraldehyde 3-phosphate + L-glutamine = pyridoxal 5'-phosphate + L-glutamate + phosphate + 3 H2O + H(+). Its pathway is cofactor biosynthesis; pyridoxal 5'-phosphate biosynthesis. Catalyzes the formation of pyridoxal 5'-phosphate from ribose 5-phosphate (RBP), glyceraldehyde 3-phosphate (G3P) and ammonia. The ammonia is provided by the PdxT subunit. Can also use ribulose 5-phosphate and dihydroxyacetone phosphate as substrates, resulting from enzyme-catalyzed isomerization of RBP and G3P, respectively. The chain is Pyridoxal 5'-phosphate synthase subunit PdxS from Actinobacillus pleuropneumoniae serotype 7 (strain AP76).